Consider the following 627-residue polypeptide: DNA-directed RNA polymerase subunit gamma (627 aa).

Zn(2+) is bound by residues Cys70, Cys72, Cys85, and Cys88. Residues Asp468, Asp470, and Asp472 each coordinate Mg(2+).

The protein belongs to the RNA polymerase beta' chain family. RpoC1 subfamily. In terms of assembly, in cyanobacteria the RNAP catalytic core is composed of 2 alpha, 1 beta, 1 beta', 1 gamma and 1 omega subunit. When a sigma factor is associated with the core the holoenzyme is formed, which can initiate transcription. Requires Mg(2+) as cofactor. Zn(2+) is required as a cofactor.

The enzyme catalyses RNA(n) + a ribonucleoside 5'-triphosphate = RNA(n+1) + diphosphate. Functionally, DNA-dependent RNA polymerase catalyzes the transcription of DNA into RNA using the four ribonucleoside triphosphates as substrates. This is DNA-directed RNA polymerase subunit gamma from Synechococcus sp. (strain JA-3-3Ab) (Cyanobacteria bacterium Yellowstone A-Prime).